A 405-amino-acid polypeptide reads, in one-letter code: MENFQFEDLSPNKVSKVYQDLKKFGSFLYNHKMGVFLVSFSSGVAYLYHNITQSHKRKQIKLAKERVMTYFESTQKLSEREVDAIITKFIDENKILDKIQTPSLASIRSEKDPSEKLKLTDQLKVSIITKLFSVLYIIPMVTIFNRLQINLIGKYCYLDYVLYKDQEQHSMRLINQQTESNFINSRNNCYFFKDINFSQFINLIQEQIKISLKDWKIDQQSSFEGFLKLLINIRNNFEKKEIIASISSDNSLLKYLIPTEEEIDNLVQSQKTPENDNDIEYQNLKMLYNEIRNIFESQKFYDVLKDSINQSFLEFTKNLREDFESTELKKQIDSIVLPDLPIEMEIPKPLVTMHNIILLPKINKQIGNIIVNKKSIIEKIGSTDLINQLNYSVLTNDLDFNKVQF.

Residues 1–26 (MENFQFEDLSPNKVSKVYQDLKKFGS) lie on the Cytoplasmic side of the membrane. Residues 27 to 49 (FLYNHKMGVFLVSFSSGVAYLYH) traverse the membrane as a helical segment. Residues 50–124 (NITQSHKRKQ…EKLKLTDQLK (75 aa)) are Peroxisomal-facing. A helical transmembrane segment spans residues 125 to 144 (VSIITKLFSVLYIIPMVTIF). Residues 145-405 (NRLQINLIGK…NDLDFNKVQF (261 aa)) are Cytoplasmic-facing.

Belongs to the peroxin-3 family.

It localises to the peroxisome membrane. In terms of biological role, involved in peroxisome biosynthesis. The chain is Peroxisome biogenesis factor 3 (pex3) from Dictyostelium discoideum (Social amoeba).